The sequence spans 363 residues: 3-ketodihydrosphingosine reductase TSC10 (363 aa).

Residue Leu10 coordinates NADP(+). Residues Gly13, Ser15, and Gly17 each contribute to the NADPH site. The GXSXG signature appears at 13–17 (GGSQG). NADP(+) is bound at residue Leu18. Residues Arg40, Lys44, Asp131, and Leu132 each contribute to the NADPH site. Position 131 (Asp131) interacts with NADP(+). Catalysis depends on Ser206, which acts as the Proton donor. NADP(+) contacts are provided by Tyr220, Lys224, and Ser253. Tyr220 serves as the catalytic Proton acceptor. Lys224 serves as the catalytic Lowers pKa of active site Tyr. Residues 324–344 (FVQWLIGVIANLLVVPFYMVL) traverse the membrane as a helical segment.

This sequence belongs to the short-chain dehydrogenases/reductases (SDR) family.

It localises to the endoplasmic reticulum membrane. The enzyme catalyses sphinganine + NADP(+) = 3-oxosphinganine + NADPH + H(+). It participates in lipid metabolism; sphingolipid metabolism. In terms of biological role, catalyzes the reduction of 3'-oxosphinganine (3-ketodihydrosphingosine/KDS) to sphinganine (dihydrosphingosine/DHS), the second step of de novo sphingolipid biosynthesis. The protein is 3-ketodihydrosphingosine reductase TSC10 (TSC10) of Candida glabrata (strain ATCC 2001 / BCRC 20586 / JCM 3761 / NBRC 0622 / NRRL Y-65 / CBS 138) (Yeast).